Reading from the N-terminus, the 365-residue chain is MGKIDFRLEKTFGYTTGACAAAGAFSALYFLKNNEKLRFVEILNLKGDSLIIPIKNIEKQKNTAISTVEKFSGEDIDITNGMDIKIEVTLEKLDNNSSKSSSVKIIGGDGVGIVTKSGLQVNPGEYAINPKPREMIENNLKSLLENDECVTAKISVPNGDEIAKKTLNPKLGIIGGISILGTTGIVRPMSNDAYKESLAPQIDVALAYNFENLIFVPGNIGTKHAKILLNAKEDQIIEVSNFWDYMLDKAKEKGVKDITVFGHAGKIVKLAGGIFDTHSRVADARNEILCAYTSLITQDVEMLQKILQSNTTEDIVEILTEKGILTEVFEKVSKRVVERLSLRWEKINFSCIIIDMKGNILGKSD.

This sequence belongs to the CbiD family.

It carries out the reaction Co-precorrin-5B + S-adenosyl-L-methionine = Co-precorrin-6A + S-adenosyl-L-homocysteine. It participates in cofactor biosynthesis; adenosylcobalamin biosynthesis; cob(II)yrinate a,c-diamide from sirohydrochlorin (anaerobic route): step 6/10. Catalyzes the methylation of C-1 in cobalt-precorrin-5B to form cobalt-precorrin-6A. This chain is Cobalt-precorrin-5B C(1)-methyltransferase, found in Methanococcus maripaludis (strain DSM 14266 / JCM 13030 / NBRC 101832 / S2 / LL).